The sequence spans 350 residues: Biotin synthase (350 aa).

The Radical SAM core domain maps to 38–256; that stretch reads NHVQVSTLLS…IAVARIMMPK (219 aa). The [4Fe-4S] cluster site is built by Cys-53, Cys-57, and Cys-60. Residues Cys-97, Cys-128, Cys-188, and Arg-260 each coordinate [2Fe-2S] cluster.

This sequence belongs to the radical SAM superfamily. Biotin synthase family. As to quaternary structure, homodimer. Requires [4Fe-4S] cluster as cofactor. The cofactor is [2Fe-2S] cluster.

The enzyme catalyses (4R,5S)-dethiobiotin + (sulfur carrier)-SH + 2 reduced [2Fe-2S]-[ferredoxin] + 2 S-adenosyl-L-methionine = (sulfur carrier)-H + biotin + 2 5'-deoxyadenosine + 2 L-methionine + 2 oxidized [2Fe-2S]-[ferredoxin]. The protein operates within cofactor biosynthesis; biotin biosynthesis; biotin from 7,8-diaminononanoate: step 2/2. In terms of biological role, catalyzes the conversion of dethiobiotin (DTB) to biotin by the insertion of a sulfur atom into dethiobiotin via a radical-based mechanism. This chain is Biotin synthase, found in Vibrio cholerae serotype O1 (strain ATCC 39541 / Classical Ogawa 395 / O395).